Reading from the N-terminus, the 208-residue chain is Putative thymidylate kinase (208 aa).

Positions 8–15 (GIDGSGVS) are defective ATP-binding.

The protein belongs to the thymidylate kinase family.

It catalyses the reaction dTMP + ATP = dTDP + ADP. The sequence is that of Putative thymidylate kinase (tmk) from Aeropyrum pernix (strain ATCC 700893 / DSM 11879 / JCM 9820 / NBRC 100138 / K1).